Consider the following 294-residue polypeptide: Nucleotide-binding protein Dde_1774 (294 aa).

14–21 provides a ligand contact to ATP; that stretch reads GLSGAGKS. 66–69 contributes to the GTP binding site; the sequence is DLRQ.

The protein belongs to the RapZ-like family.

Its function is as follows. Displays ATPase and GTPase activities. This is Nucleotide-binding protein Dde_1774 from Oleidesulfovibrio alaskensis (strain ATCC BAA-1058 / DSM 17464 / G20) (Desulfovibrio alaskensis).